Consider the following 382-residue polypeptide: ATP phosphoribosyltransferase regulatory subunit (382 aa).

It belongs to the class-II aminoacyl-tRNA synthetase family. HisZ subfamily. In terms of assembly, heteromultimer composed of HisG and HisZ subunits.

The protein resides in the cytoplasm. Its pathway is amino-acid biosynthesis; L-histidine biosynthesis; L-histidine from 5-phospho-alpha-D-ribose 1-diphosphate: step 1/9. Functionally, required for the first step of histidine biosynthesis. May allow the feedback regulation of ATP phosphoribosyltransferase activity by histidine. This is ATP phosphoribosyltransferase regulatory subunit from Burkholderia ambifaria (strain MC40-6).